Here is a 349-residue protein sequence, read N- to C-terminus: Phosphoribosylformylglycinamidine cyclo-ligase (349 aa).

It belongs to the AIR synthase family.

The protein localises to the cytoplasm. The catalysed reaction is 2-formamido-N(1)-(5-O-phospho-beta-D-ribosyl)acetamidine + ATP = 5-amino-1-(5-phospho-beta-D-ribosyl)imidazole + ADP + phosphate + H(+). The protein operates within purine metabolism; IMP biosynthesis via de novo pathway; 5-amino-1-(5-phospho-D-ribosyl)imidazole from N(2)-formyl-N(1)-(5-phospho-D-ribosyl)glycinamide: step 2/2. This Bordetella avium (strain 197N) protein is Phosphoribosylformylglycinamidine cyclo-ligase.